The primary structure comprises 328 residues: Biotin synthase (328 aa).

Positions 51–282 constitute a Radical SAM core domain; that stretch reads FNGNHVDLCS…DKIIRYAGGR (232 aa). [4Fe-4S] cluster is bound by residues cysteine 69, cysteine 73, and cysteine 76. The [2Fe-2S] cluster site is built by cysteine 112, cysteine 147, cysteine 207, and arginine 277.

The protein belongs to the radical SAM superfamily. Biotin synthase family. In terms of assembly, homodimer. Requires [4Fe-4S] cluster as cofactor. [2Fe-2S] cluster serves as cofactor.

It carries out the reaction (4R,5S)-dethiobiotin + (sulfur carrier)-SH + 2 reduced [2Fe-2S]-[ferredoxin] + 2 S-adenosyl-L-methionine = (sulfur carrier)-H + biotin + 2 5'-deoxyadenosine + 2 L-methionine + 2 oxidized [2Fe-2S]-[ferredoxin]. Its pathway is cofactor biosynthesis; biotin biosynthesis; biotin from 7,8-diaminononanoate: step 2/2. Catalyzes the conversion of dethiobiotin (DTB) to biotin by the insertion of a sulfur atom into dethiobiotin via a radical-based mechanism. This is Biotin synthase from Clostridium acetobutylicum (strain ATCC 824 / DSM 792 / JCM 1419 / IAM 19013 / LMG 5710 / NBRC 13948 / NRRL B-527 / VKM B-1787 / 2291 / W).